A 124-amino-acid polypeptide reads, in one-letter code: Meiotically up-regulated gene 103 protein (124 aa).

Its subcellular location is the nucleus. The protein localises to the nucleolus. Has a role in meiosis. The sequence is that of Meiotically up-regulated gene 103 protein (mug103) from Schizosaccharomyces pombe (strain 972 / ATCC 24843) (Fission yeast).